Reading from the N-terminus, the 338-residue chain is ATP synthase subunit a (338 aa).

The helical transmembrane segment at 15–35 threads the bilayer; it reads IAVLVMPLLLGFGAPIYAAAE. Residues 45 to 66 form a disordered region; it reads AAAVHTDEAHGEAGEHAEGGHG. Basic and acidic residues predominate over residues 49 to 65; the sequence is HTDEAHGEAGEHAEGGH. Transmembrane regions (helical) follow at residues 109 to 129, 174 to 194, 199 to 219, 238 to 258, 262 to 282, 287 to 307, and 308 to 328; these read HVVF…YVGN, LLTV…PYGA, NINV…VSAI, ALWI…PFAL, LFAN…ISFI, IVAI…EIFV, and SFLQ…LGSA.

The protein belongs to the ATPase A chain family. F-type ATPases have 2 components, CF(1) - the catalytic core - and CF(0) - the membrane proton channel. CF(1) has five subunits: alpha(3), beta(3), gamma(1), delta(1), epsilon(1). CF(0) has four main subunits: a, b, b' and c.

The protein localises to the cell inner membrane. Functionally, key component of the proton channel; it plays a direct role in the translocation of protons across the membrane. This chain is ATP synthase subunit a, found in Chlorobium phaeobacteroides (strain BS1).